The chain runs to 115 residues: Large ribosomal subunit protein bL19 (115 aa).

It belongs to the bacterial ribosomal protein bL19 family.

This protein is located at the 30S-50S ribosomal subunit interface and may play a role in the structure and function of the aminoacyl-tRNA binding site. This chain is Large ribosomal subunit protein bL19, found in Streptococcus pyogenes serotype M2 (strain MGAS10270).